Reading from the N-terminus, the 703-residue chain is Polyribonucleotide nucleotidyltransferase (703 aa).

Mg(2+) contacts are provided by aspartate 484 and aspartate 490. Residues 551-610 (PTVTTLRVLPEKISVIIGPAGKNIKKIIEETGVKIDLDPTGLVKIYATSKIAAEKAIDMI) form the KH domain. Residues 620–688 (GEVYLGKVTR…DQGRIKVSLK (69 aa)) enclose the S1 motif domain.

It belongs to the polyribonucleotide nucleotidyltransferase family. Mg(2+) serves as cofactor.

It localises to the cytoplasm. The catalysed reaction is RNA(n+1) + phosphate = RNA(n) + a ribonucleoside 5'-diphosphate. Involved in mRNA degradation. Catalyzes the phosphorolysis of single-stranded polyribonucleotides processively in the 3'- to 5'-direction. This Sulfurihydrogenibium sp. (strain YO3AOP1) protein is Polyribonucleotide nucleotidyltransferase.